Consider the following 246-residue polypeptide: MNYRFGINMKIVWCITGAGHLLRESFQVMKRLKEEIEDLKVTTLVSRAGEEVVKMYGLFGELYNISNGNYYEELILEREHPYSSPITGRLSLGKYDYLICSPATGNTVAKVVNGIADSLVTNAIAQAGKGFVKSLIVPVDYKAGIVTTKLPYAIDKKKCKLCLKCINVCPNGAIVKRDNFVEILLSKCLGCGNCKKVCPYNAIIEGKEIKMRVRKIDAENTRKLMELEDVIVLKHPYEILEFFNIR.

2 4Fe-4S ferredoxin-type domains span residues 150-178 and 179-208; these read LPYA…VKRD and NFVE…EGKE. Residues cysteine 159, cysteine 162, cysteine 165, cysteine 169, cysteine 188, cysteine 191, cysteine 194, and cysteine 198 each coordinate [4Fe-4S] cluster.

As to quaternary structure, homodimer. Requires [4Fe-4S] cluster as cofactor.

It catalyses the reaction 5,6,7,8-tetrahydromethanopterin + A = 7,8-dihydromethanopterin + AH2. It functions in the pathway cofactor biosynthesis; 5,6,7,8-tetrahydromethanopterin biosynthesis. Involved in the biosynthesis of tetrahydromethanopterin, a coenzyme used in methanogenesis. Catalyzes the reduction of dihydromethanopterin (H(2)MPT) to tetrahydromethanopterin (H(4)MPT). Ferredoxin may serve as an electron donor. The sequence is that of Dihydromethanopterin reductase (acceptor) from Methanocaldococcus jannaschii (strain ATCC 43067 / DSM 2661 / JAL-1 / JCM 10045 / NBRC 100440) (Methanococcus jannaschii).